The sequence spans 314 residues: 2-oxo-3-(phosphooxy)propyl 3-oxoalkanoate synthase (314 aa).

The protein belongs to the AfsA family.

The enzyme catalyses a medium-chain 3-oxoacyl-[ACP] + dihydroxyacetone phosphate = a (4-alkanoyl-5-oxo-2,5-dihydrofuran-3-yl)methyl phosphate + holo-[ACP] + H2O. In terms of biological role, involved of the biosynthesis of S.coelicolor butanolide 1 (SCB1), a gamma-butyrolactone that triggers antibiotic production. The polypeptide is 2-oxo-3-(phosphooxy)propyl 3-oxoalkanoate synthase (Streptomyces coelicolor (strain ATCC BAA-471 / A3(2) / M145)).